Consider the following 384-residue polypeptide: Probable E3 ubiquitin-protein ligase rnf113 (384 aa).

The segment covering methionine 1–asparagine 11 has biased composition (basic residues). The tract at residues methionine 1–alanine 96 is disordered. Residues proline 42–alanine 52 are compositionally biased toward polar residues. The segment covering serine 60–glutamine 71 has biased composition (acidic residues). Residues aspartate 175–serine 203 form a C3H1-type zinc finger. An RING-type zinc finger spans residues cysteine 241–glutamine 279. The tract at residues lysine 299 to aspartate 384 is disordered. Basic and acidic residues-rich tracts occupy residues glutamine 303–glutamate 312 and glutamate 320–glutamate 334. The segment covering glutamate 351–aspartate 384 has biased composition (acidic residues).

The enzyme catalyses S-ubiquitinyl-[E2 ubiquitin-conjugating enzyme]-L-cysteine + [acceptor protein]-L-lysine = [E2 ubiquitin-conjugating enzyme]-L-cysteine + N(6)-ubiquitinyl-[acceptor protein]-L-lysine.. It participates in protein modification; protein ubiquitination. In terms of biological role, may function as E3 ubiquitin-protein ligase that catalyzes the transfer of ubiquitin onto target proteins. May play a role in DNA repair via its role in the synthesis of 'Lys-63'-linked polyubiquitin chains that recruit proteins involved in repair to sites of DNA damage by alkylating agents. This Caenorhabditis elegans protein is Probable E3 ubiquitin-protein ligase rnf113 (rnf-113).